We begin with the raw amino-acid sequence, 21 residues long: Mast cell protease 3 (21 aa).

The region spanning 1 to 21 (IIGGVESRPHSRPYMATLEIT) is the Peptidase S1 domain. The segment at 1–21 (IIGGVESRPHSRPYMATLEIT) is disordered.

It belongs to the peptidase S1 family. Granzyme subfamily.

Its function is as follows. Thrombin inactivating protease. Displays chymotrypsin-like substrate specificity. This chain is Mast cell protease 3 (Mcpt3), found in Mus musculus (Mouse).